A 329-amino-acid polypeptide reads, in one-letter code: MKNIAIIGASGYTGAQITSLINAEMGLSIQGLYVSENSLDKGKALAELYPTYSHIHLCLSPLNDDAKAAIVEQADAVVLATDHVVSLHLAAWFYQQGLAVFDLSGAYRFEALDKYPKWYGFTHEYPQVLADAVYGLAEWNAEKIATSKMIAVPGCYPTASLTALKPLADLLTDVMPVINAVSGVTGAGRKAQLHTSFCEVSLTPYGVLGHRHQPEIATQLGQEVIFTPHLGNFKRGILATITVQLAQGTTAKDIEAAYQCYDNAPLVTVKQNQFPKVDDVVQTPNCLIGWKFDPETNYLVVTSAIDNLMKGAASQALQCIKIHFNELLK.

Cysteine 155 is an active-site residue.

This sequence belongs to the NAGSA dehydrogenase family. Type 1 subfamily.

It is found in the cytoplasm. The catalysed reaction is N-acetyl-L-glutamate 5-semialdehyde + phosphate + NADP(+) = N-acetyl-L-glutamyl 5-phosphate + NADPH + H(+). It functions in the pathway amino-acid biosynthesis; L-arginine biosynthesis; N(2)-acetyl-L-ornithine from L-glutamate: step 3/4. Catalyzes the NADPH-dependent reduction of N-acetyl-5-glutamyl phosphate to yield N-acetyl-L-glutamate 5-semialdehyde. In Shewanella piezotolerans (strain WP3 / JCM 13877), this protein is N-acetyl-gamma-glutamyl-phosphate reductase.